A 338-amino-acid polypeptide reads, in one-letter code: Fructose-1,6-bisphosphatase class 1 (338 aa).

Glu92, Asp115, Leu117, and Asp118 together coordinate Mg(2+). Substrate contacts are provided by residues 118–121, Asn211, Tyr244, 262–264, and Lys274; these read DGSS and YLY. Glu280 contributes to the Mg(2+) binding site.

This sequence belongs to the FBPase class 1 family. In terms of assembly, homotetramer. Mg(2+) serves as cofactor.

Its subcellular location is the cytoplasm. It catalyses the reaction beta-D-fructose 1,6-bisphosphate + H2O = beta-D-fructose 6-phosphate + phosphate. It functions in the pathway carbohydrate biosynthesis; gluconeogenesis. The polypeptide is Fructose-1,6-bisphosphatase class 1 (Vibrio vulnificus (strain YJ016)).